A 166-amino-acid polypeptide reads, in one-letter code: uncharacterized protein (166 aa).

Positions 3–65 constitute an HTH asnC-type domain; the sequence is LTEKETEILE…IDWRKVDGHE (63 aa). The segment at residues 22–41 is a DNA-binding region (H-T-H motif); it reads LETIAKMAGIPVNEVKTIID.

This is an uncharacterized protein from Bacillus subtilis (strain 168).